Reading from the N-terminus, the 111-residue chain is Small ribosomal subunit protein bS18 (111 aa).

A disordered region spans residues 1 to 32; it reads MDLENTENVENNNNNEEEVKAKGERKAHFNKE. The span at 17–32 shows a compositional bias: basic and acidic residues; it reads EEVKAKGERKAHFNKE.

This sequence belongs to the bacterial ribosomal protein bS18 family. Part of the 30S ribosomal subunit. Forms a tight heterodimer with protein bS6.

Its function is as follows. Binds as a heterodimer with protein bS6 to the central domain of the 16S rRNA, where it helps stabilize the platform of the 30S subunit. In Brachyspira hyodysenteriae (strain ATCC 49526 / WA1), this protein is Small ribosomal subunit protein bS18.